We begin with the raw amino-acid sequence, 60 residues long: Cytotoxin 2 (60 aa).

Cystine bridges form between Cys3-Cys21, Cys14-Cys38, Cys42-Cys53, and Cys54-Cys59.

This sequence belongs to the three-finger toxin family. Short-chain subfamily. Type IA cytotoxin sub-subfamily. Monomer in solution; Homodimer and oligomer in the presence of negatively charged lipids forming a pore with a size ranging between 20 and 30 Angstroms. Expressed by the venom gland.

The protein localises to the secreted. Its subcellular location is the target cell membrane. In terms of biological role, shows cytolytic activity on many different cells by forming pore in lipid membranes. In vivo, increases heart rate or kills the animal by cardiac arrest. In addition, it binds to heparin with high affinity, interacts with Kv channel-interacting protein 1 (KCNIP1) in a calcium-independent manner, and binds to integrin alpha-V/beta-3 (ITGAV/ITGB3) with moderate affinity. In Naja nivea (Cape cobra), this protein is Cytotoxin 2.